Reading from the N-terminus, the 209-residue chain is Uracil phosphoribosyltransferase (209 aa).

5-phospho-alpha-D-ribose 1-diphosphate-binding positions include R79, R104, and 131–139 (DPMLATGGS). Uracil is bound by residues I194 and 199-201 (GDA). D200 lines the 5-phospho-alpha-D-ribose 1-diphosphate pocket.

Belongs to the UPRTase family. Requires Mg(2+) as cofactor.

The catalysed reaction is UMP + diphosphate = 5-phospho-alpha-D-ribose 1-diphosphate + uracil. It functions in the pathway pyrimidine metabolism; UMP biosynthesis via salvage pathway; UMP from uracil: step 1/1. With respect to regulation, allosterically activated by GTP. Catalyzes the conversion of uracil and 5-phospho-alpha-D-ribose 1-diphosphate (PRPP) to UMP and diphosphate. This is Uracil phosphoribosyltransferase from Streptococcus salivarius.